We begin with the raw amino-acid sequence, 430 residues long: von Willebrand factor (430 aa).

Asn-6 carries N-linked (GlcNAc...) asparagine glycosylation. Cys-9 and Cys-12 are oxidised to a cystine. 3 O-linked (GalNAc...) threonine glycosylation sites follow: Thr-23, Thr-30, and Thr-31. Cys-47 and Cys-233 form a disulfide bridge. The region spanning 52-228 is the VWFA 1; binding site for platelet glycoprotein Ib domain; sequence DLVFLLDGSY…DELEQRRDEI (177 aa). An O-linked (GalNAc...) threonine glycan is attached at Thr-252. Ser-261 is a glycosylation site (O-linked (GalNAc...) serine). Residues 273 to 430 form the VWFA 2 domain; the sequence is DVVFVLEASD…ITPIFIQDFE (158 aa). 2 N-linked (GlcNAc...) asparagine glycosylation sites follow: Asn-290 and Asn-349.

In terms of assembly, multimeric. Interacts with F8. In terms of processing, N- and O-glycosylated. Plasma.

The protein localises to the secreted. It localises to the extracellular space. The protein resides in the extracellular matrix. In terms of biological role, important in the maintenance of hemostasis, it promotes adhesion of platelets to the sites of vascular injury by forming a molecular bridge between sub-endothelial collagen matrix and platelet-surface receptor complex GPIb-IX-V. Also acts as a chaperone for coagulation factor VIII, delivering it to the site of injury, stabilizing its heterodimeric structure and protecting it from premature clearance from plasma. The protein is von Willebrand factor of Rattus norvegicus (Rat).